The sequence spans 443 residues: tRNA modification GTPase MnmE (443 aa).

Positions 23, 81, and 119 each coordinate (6S)-5-formyl-5,6,7,8-tetrahydrofolate. The TrmE-type G domain occupies 214 to 369 (GMRVAILGKP…LLSALKERAI (156 aa)). GTP contacts are provided by residues 224–229 (NVGKST), 243–249 (SEYPGTT), and 268–271 (DTAG). The Mg(2+) site is built by S228 and T249. K443 lines the (6S)-5-formyl-5,6,7,8-tetrahydrofolate pocket.

This sequence belongs to the TRAFAC class TrmE-Era-EngA-EngB-Septin-like GTPase superfamily. TrmE GTPase family. Homodimer. Heterotetramer of two MnmE and two MnmG subunits. Requires K(+) as cofactor.

It is found in the cytoplasm. Exhibits a very high intrinsic GTPase hydrolysis rate. Involved in the addition of a carboxymethylaminomethyl (cmnm) group at the wobble position (U34) of certain tRNAs, forming tRNA-cmnm(5)s(2)U34. This is tRNA modification GTPase MnmE from Anaplasma marginale (strain St. Maries).